The primary structure comprises 1034 residues: MKQVKSVNFRELDKKVKEYWKKENTYKKVKALNEHGPEYYFVDGPPYCSGAIHLGTAWNKIIKDTVLRFKRIQGYNVLDKAGWDMHGLPIEVKVENEFNIGSKKDIETKIGTQEFINKCKEFALNHLGHMQGQFENLGVWLDFENAYMPIKRDYMEMGWWTLKKAHEKELLTKDLRSGYWCPRCETSLAEHEVRGEYKEVLDPSVYVKFKLEKSDEYITIWTTTPWTLPSNMLVCVNPEFDYAYVNVEFENGTAETWIIAEKLVNDVMKKAEKNNDISKFSISKVVKGDSLIGLKYIHPLLEENEKQQEFAKIENVHTIVPGDHVTLEGGTGLVHTAPGFGEDDFNIGKEHNIPVYAPIDDNGKYTDSIWKGTFVKDMDESVIETLISKNLLVNSGKVKHTYPHCWRCKTPLLFRATEQWFLSISKIKDSIIEQGKTVDWVPDWVKTRYVNGVSFVGDWNISRQRYWGIPLPIWICEECGNYEVIGSVDELKERANEKDVDLSDIHKPAVDKITLTCSCGGKMKRTPDVLDVWYDSGLAPYASIGSKKLKKAQFITEGNDQVTKWFYSQHALSAVVFDDTSYEKCMMHGFTLDETGEKMSKSLGNIVSPDDVTEQYGADVLRFYLLSANKAWEDLRFSYSEMDETRSMLNTLWNSYAFSANYMVLDDFVPNNEYFKHVKDEDAWILSRINTVAKEAVEALEKPHLHVYTWALRDFILNDFSRWYIKLIRDRTWMEKNDVQKLSAYQTLYYVIMKLISIMAPVTPHLSEEIYQNLKTEDMPESIFMNKLTIESEFINETLEKDTEIIREIVDSILKGRDKAKYTLRYPITKITLPENIAETVEKYGYIIKEQGNVKEIELKEFEGNITVKPNFKELGKIFRSDVPKVVAAINSVAPNELKEKLKSGNFEVSEYEIKPEYVEFRVEIPENIVGVEFSKGNVYINIEMNDEVIKEGLVREVVRRIQSMRKDMDLDINEKINVKLEGIDFSSDYLSHIANEVRGNFVESLKSDYNQKWTIKTPNEETYDISIDIEKNK.

Residues 46–56 (PYCSGAIHLGT) carry the 'HIGH' region motif. A 'KMSKS' region motif is present at residues 598-602 (KMSKS). Lys-601 serves as a coordination point for ATP.

It belongs to the class-I aminoacyl-tRNA synthetase family. IleS type 2 subfamily. In terms of assembly, monomer. Requires Zn(2+) as cofactor.

It localises to the cytoplasm. It carries out the reaction tRNA(Ile) + L-isoleucine + ATP = L-isoleucyl-tRNA(Ile) + AMP + diphosphate. Catalyzes the attachment of isoleucine to tRNA(Ile). As IleRS can inadvertently accommodate and process structurally similar amino acids such as valine, to avoid such errors it has two additional distinct tRNA(Ile)-dependent editing activities. One activity is designated as 'pretransfer' editing and involves the hydrolysis of activated Val-AMP. The other activity is designated 'posttransfer' editing and involves deacylation of mischarged Val-tRNA(Ile). The sequence is that of Isoleucine--tRNA ligase from Methanococcus maripaludis (strain DSM 14266 / JCM 13030 / NBRC 101832 / S2 / LL).